The primary structure comprises 589 residues: 5'-AMP-activated protein kinase catalytic subunit alpha-1 (589 aa).

Positions 24–276 (FVIKETIGKG…VKRIVNHSWF (253 aa)) constitute a Protein kinase domain. Residues 30-38 (IGKGAFGAV) and lysine 53 each bind ATP. Residue aspartate 147 is the Proton acceptor of the active site.

It belongs to the protein kinase superfamily. CAMK Ser/Thr protein kinase family. SNF1 subfamily.

The catalysed reaction is L-seryl-[protein] + ATP = O-phospho-L-seryl-[protein] + ADP + H(+). The enzyme catalyses L-threonyl-[protein] + ATP = O-phospho-L-threonyl-[protein] + ADP + H(+). Its function is as follows. Probably does not act as a sensor that couples lifespan to information about energy levels and insulin-like signals. Together with aak-2, involved in the establishment of germline stem cell (GSC) quiescence during dauer development. Plays a role in the maintenance of glycogen stores which are necessary for resistance to hyperosmotic stress. This chain is 5'-AMP-activated protein kinase catalytic subunit alpha-1 (aak-1), found in Caenorhabditis elegans.